Consider the following 132-residue polypeptide: NADH-quinone oxidoreductase subunit A 2 (132 aa).

A run of 3 helical transmembrane segments spans residues 9–29 (AWAF…MLGL), 66–86 (LVAM…LWAV), and 93–113 (WAGF…LFYL).

It belongs to the complex I subunit 3 family. As to quaternary structure, NDH-1 is composed of 13 different subunits. Subunits NuoA, H, J, K, L, M, N constitute the membrane sector of the complex.

It localises to the cell inner membrane. The enzyme catalyses a quinone + NADH + 5 H(+)(in) = a quinol + NAD(+) + 4 H(+)(out). In terms of biological role, NDH-1 shuttles electrons from NADH, via FMN and iron-sulfur (Fe-S) centers, to quinones in the respiratory chain. The immediate electron acceptor for the enzyme in this species is believed to be ubiquinone. Couples the redox reaction to proton translocation (for every two electrons transferred, four hydrogen ions are translocated across the cytoplasmic membrane), and thus conserves the redox energy in a proton gradient. In Pseudomonas paraeruginosa (strain DSM 24068 / PA7) (Pseudomonas aeruginosa (strain PA7)), this protein is NADH-quinone oxidoreductase subunit A 2.